We begin with the raw amino-acid sequence, 118 residues long: Basic phospholipase A2 2 (118 aa).

7 disulfides stabilise this stretch: Cys-11/Cys-71, Cys-27/Cys-117, Cys-29/Cys-45, Cys-44/Cys-98, Cys-51/Cys-91, Cys-60/Cys-84, and Cys-78/Cys-89. The Ca(2+) site is built by Tyr-28, Gly-30, and Gly-32. Residue His-48 is part of the active site. Asp-49 serves as a coordination point for Ca(2+). The active site involves Asp-92.

Belongs to the phospholipase A2 family. Group I subfamily. D49 sub-subfamily. The cofactor is Ca(2+). As to expression, expressed by the venom gland.

It is found in the secreted. It catalyses the reaction a 1,2-diacyl-sn-glycero-3-phosphocholine + H2O = a 1-acyl-sn-glycero-3-phosphocholine + a fatty acid + H(+). In terms of biological role, snake venom phospholipase A2 (PLA2) that inhibits neuromuscular transmission by blocking acetylcholine release from the nerve termini. PLA2 catalyzes the calcium-dependent hydrolysis of the 2-acyl groups in 3-sn-phosphoglycerides. The chain is Basic phospholipase A2 2 from Laticauda colubrina (Yellow-lipped sea krait).